Here is a 674-residue protein sequence, read N- to C-terminus: DNA ligase (674 aa).

NAD(+) is bound by residues 34-38 (DAEYD), 84-85 (SL), and E116. The active-site N6-AMP-lysine intermediate is K118. Residues R139, E174, K291, and K315 each coordinate NAD(+). Positions 409, 412, 425, and 430 each coordinate Zn(2+). The BRCT domain maps to 586–674 (RGEEALKGLT…TGKPVETLAS (89 aa)).

It belongs to the NAD-dependent DNA ligase family. LigA subfamily. Requires Mg(2+) as cofactor. Mn(2+) serves as cofactor.

It carries out the reaction NAD(+) + (deoxyribonucleotide)n-3'-hydroxyl + 5'-phospho-(deoxyribonucleotide)m = (deoxyribonucleotide)n+m + AMP + beta-nicotinamide D-nucleotide.. DNA ligase that catalyzes the formation of phosphodiester linkages between 5'-phosphoryl and 3'-hydroxyl groups in double-stranded DNA using NAD as a coenzyme and as the energy source for the reaction. It is essential for DNA replication and repair of damaged DNA. The polypeptide is DNA ligase (Thermus scotoductus).